The primary structure comprises 483 residues: Probable L-xylulose kinase (483 aa).

It belongs to the FGGY kinase family. As to quaternary structure, homodimer.

It catalyses the reaction L-xylulose + ATP = L-xylulose 5-phosphate + ADP + H(+). The protein is Probable L-xylulose kinase (lyx) of Pasteurella multocida (strain Pm70).